A 198-amino-acid chain; its full sequence is Na(+)-translocating NADH-quinone reductase subunit E (198 aa).

Helical transmembrane passes span 11–31, 39–59, 77–97, 110–130, 140–160, and 176–196; these read SIFI…FLAV, FGLG…NNLV, FLNF…LEMI, GIFL…SFMV, VVYG…LAGI, and LGIT…FSGV.

This sequence belongs to the NqrDE/RnfAE family. As to quaternary structure, composed of six subunits; NqrA, NqrB, NqrC, NqrD, NqrE and NqrF.

The protein resides in the cell inner membrane. The catalysed reaction is a ubiquinone + n Na(+)(in) + NADH + H(+) = a ubiquinol + n Na(+)(out) + NAD(+). In terms of biological role, NQR complex catalyzes the reduction of ubiquinone-1 to ubiquinol by two successive reactions, coupled with the transport of Na(+) ions from the cytoplasm to the periplasm. NqrA to NqrE are probably involved in the second step, the conversion of ubisemiquinone to ubiquinol. This Vibrio vulnificus (strain CMCP6) protein is Na(+)-translocating NADH-quinone reductase subunit E.